The sequence spans 64 residues: Large ribosomal subunit protein bL28 (64 aa).

This sequence belongs to the bacterial ribosomal protein bL28 family.

The chain is Large ribosomal subunit protein bL28 from Persephonella marina (strain DSM 14350 / EX-H1).